We begin with the raw amino-acid sequence, 87 residues long: U3-theraphotoxin-Hhn1b (87 aa).

The N-terminal stretch at 1–24 (MVNMKASMFLTFAGLVLLFVVCYA) is a signal peptide. A propeptide spanning residues 25 to 52 (SESEEKEFPREMLSSIFAVDNDFKQEER) is cleaved from the precursor. 2 disulfide bridges follow: cysteine 54/cysteine 67 and cysteine 61/cysteine 72.

This sequence belongs to the neurotoxin 10 (Hwtx-1) family. 51 (Hntx-8) subfamily. Hntx-8 sub-subfamily. In terms of tissue distribution, expressed by the venom gland.

The protein resides in the secreted. Ion channel inhibitor. The sequence is that of U3-theraphotoxin-Hhn1b from Cyriopagopus hainanus (Chinese bird spider).